Consider the following 360-residue polypeptide: 3-isopropylmalate dehydrogenase (360 aa).

Position 76 to 89 (76 to 89) interacts with NAD(+); it reads GPKWDTIERDIRPE. Residues Arg-96, Arg-106, Arg-134, and Asp-224 each contribute to the substrate site. Positions 224, 248, and 252 each coordinate Mg(2+). 282–294 is a binding site for NAD(+); the sequence is GSAPDIAGKGIAN.

It belongs to the isocitrate and isopropylmalate dehydrogenases family. LeuB type 1 subfamily. Homodimer. It depends on Mg(2+) as a cofactor. Mn(2+) serves as cofactor.

The protein resides in the cytoplasm. The enzyme catalyses (2R,3S)-3-isopropylmalate + NAD(+) = 4-methyl-2-oxopentanoate + CO2 + NADH. It functions in the pathway amino-acid biosynthesis; L-leucine biosynthesis; L-leucine from 3-methyl-2-oxobutanoate: step 3/4. Its function is as follows. Catalyzes the oxidation of 3-carboxy-2-hydroxy-4-methylpentanoate (3-isopropylmalate) to 3-carboxy-4-methyl-2-oxopentanoate. The product decarboxylates to 4-methyl-2 oxopentanoate. The polypeptide is 3-isopropylmalate dehydrogenase (Pseudomonas syringae pv. syringae (strain B728a)).